The following is a 765-amino-acid chain: E3 ubiquitin-protein ligase SMURF2 (765 aa).

The region spanning 1–117 (MSNQGVRRNG…KDTGYQRLDL (117 aa)) is the C2 domain. WW domains lie at 157 to 190 (NDLP…RPTR), 251 to 284 (PDLP…DPRV), and 297 to 330 (GPLP…DPRL). The tract at residues 341–375 (SPNGSRAAVEAQSSSRPGQLKEQAQSVVSPGNLPE) is disordered. Positions 351–369 (AQSSSRPGQLKEQAQSVVS) are enriched in polar residues. The 335-residue stretch at 431 to 765 (RPKDLWKRLM…IEETCGFAVE (335 aa)) folds into the HECT domain. The active-site Glycyl thioester intermediate is the C733.

Its subcellular location is the nucleus. The protein localises to the cytoplasm. It localises to the cell membrane. The protein resides in the membrane raft. The enzyme catalyses S-ubiquitinyl-[E2 ubiquitin-conjugating enzyme]-L-cysteine + [acceptor protein]-L-lysine = [E2 ubiquitin-conjugating enzyme]-L-cysteine + N(6)-ubiquitinyl-[acceptor protein]-L-lysine.. Its pathway is protein modification; protein ubiquitination. Functionally, E3 ubiquitin-protein ligase which accepts ubiquitin from an E2 ubiquitin-conjugating enzyme in the form of a thioester and then directly transfers the ubiquitin to targeted substrates. The protein is E3 ubiquitin-protein ligase SMURF2 (smurf2) of Danio rerio (Zebrafish).